A 711-amino-acid chain; its full sequence is Polyribonucleotide nucleotidyltransferase (711 aa).

Mg(2+) is bound by residues Asp490 and Asp496. The 60-residue stretch at 557 to 616 folds into the KH domain; sequence PRIETMQIPTDKIREVIGSGGKVIREIVETSGAKVDINDDGIIKIASANGEAIKKAYEMI. The region spanning 626-694 is the S1 motif domain; sequence GKVYTGTVVK…DRGKVRLSMK (69 aa).

The protein belongs to the polyribonucleotide nucleotidyltransferase family. Mg(2+) is required as a cofactor.

It is found in the cytoplasm. It carries out the reaction RNA(n+1) + phosphate = RNA(n) + a ribonucleoside 5'-diphosphate. Functionally, involved in mRNA degradation. Catalyzes the phosphorolysis of single-stranded polyribonucleotides processively in the 3'- to 5'-direction. The polypeptide is Polyribonucleotide nucleotidyltransferase (Dinoroseobacter shibae (strain DSM 16493 / NCIMB 14021 / DFL 12)).